Consider the following 283-residue polypeptide: Nucleoid occlusion protein (283 aa).

Positions 148 to 167 (EALAQRLGKGQSTIANKLRL) form a DNA-binding region, H-T-H motif.

It belongs to the ParB family.

The protein resides in the cytoplasm. It is found in the nucleoid. Functionally, effects nucleoid occlusion by binding relatively nonspecifically to DNA and preventing the assembly of the division machinery in the vicinity of the nucleoid, especially under conditions that disturb the cell cycle. It helps to coordinate cell division and chromosome segregation by preventing the formation of the Z ring through the nucleoid, which would cause chromosome breakage. The polypeptide is Nucleoid occlusion protein (noc) (Bacillus subtilis (strain 168)).